We begin with the raw amino-acid sequence, 142 residues long: Hemoglobin subunit alpha (142 aa).

S1 carries the post-translational modification N-acetylserine. The 142-residue stretch at 1 to 142 (SLTAKSKSIV…VASALSEKYR (142 aa)) folds into the Globin domain. An O2-binding site is contributed by H59. H88 is a binding site for heme b.

This sequence belongs to the globin family. In terms of assembly, heterotetramer of two alpha chains and two beta chains. As to expression, red blood cells.

In terms of biological role, involved in oxygen transport from gills to the various peripheral tissues. The polypeptide is Hemoglobin subunit alpha (hba) (Electrophorus electricus (Electric eel)).